Here is a 355-residue protein sequence, read N- to C-terminus: Alanine racemase (355 aa).

Residue Lys37 is the Proton acceptor; specific for D-alanine of the active site. An N6-(pyridoxal phosphate)lysine modification is found at Lys37. Arg129 contacts substrate. The active-site Proton acceptor; specific for L-alanine is Tyr251. Met299 is a binding site for substrate.

This sequence belongs to the alanine racemase family. Requires pyridoxal 5'-phosphate as cofactor.

The enzyme catalyses L-alanine = D-alanine. The protein operates within amino-acid biosynthesis; D-alanine biosynthesis; D-alanine from L-alanine: step 1/1. Functionally, catalyzes the interconversion of L-alanine and D-alanine. May also act on other amino acids. The protein is Alanine racemase (alr) of Deinococcus geothermalis (strain DSM 11300 / CIP 105573 / AG-3a).